Reading from the N-terminus, the 306-residue chain is Meiotically up-regulated gene 73 protein (306 aa).

The next 7 helical transmembrane spans lie at 28 to 48 (YWAVFAVFLLCAIVFPLVSIF), 59 to 79 (FFSILSLVSCLAYFTMACNYG), 103 to 123 (YIQWLINFPLIIVMLHWTVGV), 125 to 145 (ILEIAYVVCYVLFAIVCLLAA), 154 to 174 (WAYYGFSFVGYFIALAHSVVL), 190 to 210 (FLWSIVYLHVIWFLYYACWIL), and 224 to 244 (IFYSILDLFEFGFFGAAFSWM).

Belongs to the archaeal/bacterial/fungal opsin family.

The protein localises to the membrane. Its function is as follows. Has a role in meiosis. The protein is Meiotically up-regulated gene 73 protein (mug73) of Schizosaccharomyces pombe (strain 972 / ATCC 24843) (Fission yeast).